A 530-amino-acid polypeptide reads, in one-letter code: Phosphoenolpyruvate carboxykinase (ATP) (530 aa).

The substrate site is built by Arg-58, Tyr-195, and Lys-201. ATP is bound by residues Lys-201, His-220, and 236 to 244; that span reads GLSGTGKTT. 2 residues coordinate Mn(2+): Lys-201 and His-220. Asp-257 lines the Mn(2+) pocket. Residues Glu-285, Arg-321, 440-441, and Thr-446 each bind ATP; that span reads RI. Arg-321 provides a ligand contact to substrate.

It belongs to the phosphoenolpyruvate carboxykinase (ATP) family. Mn(2+) is required as a cofactor.

It localises to the cytoplasm. The catalysed reaction is oxaloacetate + ATP = phosphoenolpyruvate + ADP + CO2. It functions in the pathway carbohydrate biosynthesis; gluconeogenesis. Its function is as follows. Involved in the gluconeogenesis. Catalyzes the conversion of oxaloacetate (OAA) to phosphoenolpyruvate (PEP) through direct phosphoryl transfer between the nucleoside triphosphate and OAA. The protein is Phosphoenolpyruvate carboxykinase (ATP) of Staphylococcus haemolyticus (strain JCSC1435).